We begin with the raw amino-acid sequence, 462 residues long: L-seryl-tRNA(Sec) selenium transferase (462 aa).

An N6-(pyridoxal phosphate)lysine modification is found at Lys-294.

Belongs to the SelA family. In terms of assembly, homodecamer; pentamer of dimers. Binds only one seryl-tRNA(Sec) per dimer. Pyridoxal 5'-phosphate serves as cofactor.

The protein resides in the cytoplasm. The enzyme catalyses L-seryl-tRNA(Sec) + selenophosphate + H(+) = L-selenocysteinyl-tRNA(Sec) + phosphate. The protein operates within aminoacyl-tRNA biosynthesis; selenocysteinyl-tRNA(Sec) biosynthesis; selenocysteinyl-tRNA(Sec) from L-seryl-tRNA(Sec) (bacterial route): step 1/1. Functionally, converts seryl-tRNA(Sec) to selenocysteinyl-tRNA(Sec) required for selenoprotein biosynthesis. The chain is L-seryl-tRNA(Sec) selenium transferase from Yersinia enterocolitica serotype O:8 / biotype 1B (strain NCTC 13174 / 8081).